The chain runs to 595 residues: Proline--tRNA ligase (595 aa).

It belongs to the class-II aminoacyl-tRNA synthetase family. ProS type 1 subfamily. As to quaternary structure, homodimer.

It is found in the cytoplasm. It carries out the reaction tRNA(Pro) + L-proline + ATP = L-prolyl-tRNA(Pro) + AMP + diphosphate. Catalyzes the attachment of proline to tRNA(Pro) in a two-step reaction: proline is first activated by ATP to form Pro-AMP and then transferred to the acceptor end of tRNA(Pro). As ProRS can inadvertently accommodate and process non-cognate amino acids such as alanine and cysteine, to avoid such errors it has two additional distinct editing activities against alanine. One activity is designated as 'pretransfer' editing and involves the tRNA(Pro)-independent hydrolysis of activated Ala-AMP. The other activity is designated 'posttransfer' editing and involves deacylation of mischarged Ala-tRNA(Pro). The misacylated Cys-tRNA(Pro) is not edited by ProRS. The sequence is that of Proline--tRNA ligase from Treponema denticola (strain ATCC 35405 / DSM 14222 / CIP 103919 / JCM 8153 / KCTC 15104).